The sequence spans 1865 residues: Transcription initiation factor TFIID subunit 1 (1865 aa).

Residues 1–27 (MLLPATGASRSAAIMSDTDSDEDSSGG) are disordered. In terms of domain architecture, Protein kinase 1 spans 1-409 (MLLPATGASR…VTQLHWEDDI (409 aa)). Residue Ser-131 is modified to Phosphoserine; by autocatalysis. The segment at 144 to 199 (EDIDCKLMPPPPPPPGPVKKEKDQDGLTGEKVDFSSSSDSESEMGPQEAAQAESKD) is disordered. A compositionally biased stretch (pro residues) spans 151–160 (MPPPPPPPGP). Residues 161–176 (VKKEKDQDGLTGEKVD) are compositionally biased toward basic and acidic residues. A Phosphoserine; by autocatalysis modification is found at Ser-302. Residues 509–530 (PDEKEEATSNSPSKENKKESSL) form a disordered region. The segment at 512–971 (KEEATSNSPS…KIPNKPTQQK (460 aa)) is histone acetyltransferase (HAT). Position 539 is an N6-acetyllysine (Lys-539). Glycyl lysine isopeptide (Lys-Gly) (interchain with G-Cter in SUMO2) cross-links involve residues Lys-544 and Lys-557. Disordered stretches follow at residues 964 to 983 (PNKP…KKTV) and 1228 to 1252 (RLKR…MKER). Composition is skewed to basic and acidic residues over residues 969-978 (QQKDDKEPQP) and 1228-1244 (RLKR…PPEK). A DNA-binding region (HMG box) is located at residues 1190–1268 (VRIRTTKDEE…CGACGAIGHM (79 aa)). Residues 1337–1624 (VLKFPKQQLP…TAKEAALEEA (288 aa)) form an interaction with ASF1A and ASF1B region. A Nuclear localization signal motif is present at residues 1346–1353 (PPKKKRRV). 2 consecutive Bromo domains span residues 1371-1479 (RRRT…LKEK) and 1493-1602 (LLDD…LTEY). One can recognise a Protein kinase 2 domain in the interval 1420 to 1865 (MDLQTLRENV…AGDSDMDSDE (446 aa)). Residues 1625–1865 (ELESLDPMTP…AGDSDMDSDE (241 aa)) are disordered. Pro residues predominate over residues 1633–1642 (TPGPYTPQPP). A compositionally biased stretch (polar residues) spans 1646 to 1682 (DNSTSLSVSRDASVYQDESNMSVLDIPSATSEKQLTQ). A phosphoserine mark is found at Ser-1664 and Ser-1667. 2 stretches are compositionally biased toward acidic residues: residues 1683 to 1697 (EGED…EEEG) and 1715 to 1730 (EGED…EEGD). Residues 1739-1751 (SESGSDSDVGSGS) show a composition bias toward low complexity. Phosphoserine occurs at positions 1773, 1776, and 1794. Polar residues predominate over residues 1804-1814 (KSNTQDTSFSS). Residues 1820–1829 (VSEEEEDEEE) are compositionally biased toward acidic residues. Position 1821 is a phosphoserine (Ser-1821). The segment covering 1832-1841 (SGPSVLSQVH) has biased composition (polar residues).

It belongs to the TAF1 family. In terms of assembly, component of the TFIID basal transcription factor complex, composed of TATA-box-binding protein TBP, and a number of TBP-associated factors (TAFs), including TAF1, TAF2, TAF3, TAF4, TAF5, TAF6, TAF7, TAF8, TAF9, TAF10, TAF11, TAF12 and TAF13. Interacts with TAF7; the interaction is direct. TAF1, when part of the TFIID complex, interacts with C-terminus of TP53. Part of a TFIID-containing RNA polymerase II pre-initiation complex that is composed of TBP and at least GTF2A1, GTF2A2, GTF2E1, GTF2E2, GTF2F1, GTF2H2, GTF2H3, GTF2H4, GTF2H5, GTF2B, TCEA1, ERCC2, ERCC3, TAF1, TAF2, TAF3, TAF4, TAF5, TAF6, TAF7, TAF8, TAF9, TAF10, TAF11, TAF12 and TAF13. Component of some MLL1/MLL complex, at least composed of the core components KMT2A/MLL1, ASH2L, HCFC1/HCF1, WDR5 and RBBP5, as well as the facultative components BACC1, CHD8, E2F6, HSP70, INO80C, KANSL1, LAS1L, MAX, MCRS1, MGA, KAT8/MOF, PELP1, PHF20, PRP31, RING2, RUVB1/TIP49A, RUVB2/TIP49B, SENP3, TAF1, TAF4, TAF6, TAF7, TAF9 and TEX10. RB1 interacts with the N-terminal domain of TAF1. Interacts with ASF1A and ASF1B. Interacts (via bromo domains) with acetylated lysine residues on the N-terminus of histone H1.4, H2A, H2B, H3 and H4 (in vitro). Requires Mg(2+) as cofactor. Phosphorylated by casein kinase II in vitro.

The protein resides in the nucleus. It catalyses the reaction L-seryl-[protein] + ATP = O-phospho-L-seryl-[protein] + ADP + H(+). The catalysed reaction is L-threonyl-[protein] + ATP = O-phospho-L-threonyl-[protein] + ADP + H(+). The enzyme catalyses L-lysyl-[protein] + acetyl-CoA = N(6)-acetyl-L-lysyl-[protein] + CoA + H(+). Autophosphorylates on Ser residues. Inhibited by retinoblastoma tumor suppressor protein, RB1. Binding to TAF1 or CIITA inhibits the histone acetyltransferase activity. The TFIID basal transcription factor complex plays a major role in the initiation of RNA polymerase II (Pol II)-dependent transcription. TFIID recognizes and binds promoters with or without a TATA box via its subunit TBP, a TATA-box-binding protein, and promotes assembly of the pre-initiation complex (PIC). The TFIID complex consists of TBP and TBP-associated factors (TAFs), including TAF1, TAF2, TAF3, TAF4, TAF5, TAF6, TAF7, TAF8, TAF9, TAF10, TAF11, TAF12 and TAF13. TAF1 is the largest component and core scaffold of the TFIID complex, involved in nucleating complex assembly. TAF1 forms a promoter DNA binding subcomplex of TFIID, together with TAF7 and TAF2. Contains novel N- and C-terminal Ser/Thr kinase domains which can autophosphorylate or transphosphorylate other transcription factors. Phosphorylates TP53 on 'Thr-55' which leads to MDM2-mediated degradation of TP53. Phosphorylates GTF2A1 and GTF2F1 on Ser residues. Possesses DNA-binding activity. Essential for progression of the G1 phase of the cell cycle. The protein is Transcription initiation factor TFIID subunit 1 of Mesocricetus auratus (Golden hamster).